We begin with the raw amino-acid sequence, 378 residues long: Chaperone protein DnaJ (378 aa).

The 66-residue stretch at 5–70 (DYYEVLGVAK…QKRAAYDQYG (66 aa)) folds into the J domain. The CR-type zinc finger occupies 138–216 (GYDTQIRVPS…CHGSGKVKET (79 aa)). 8 residues coordinate Zn(2+): C151, C154, C168, C171, C190, C193, C204, and C207. CXXCXGXG motif repeat units follow at residues 151 to 158 (CEVCHGSG), 168 to 175 (CPTCHGQG), 190 to 197 (CPKCHGTG), and 204 to 211 (CAHCHGSG).

The protein belongs to the DnaJ family. In terms of assembly, homodimer. It depends on Zn(2+) as a cofactor.

It localises to the cytoplasm. Functionally, participates actively in the response to hyperosmotic and heat shock by preventing the aggregation of stress-denatured proteins and by disaggregating proteins, also in an autonomous, DnaK-independent fashion. Unfolded proteins bind initially to DnaJ; upon interaction with the DnaJ-bound protein, DnaK hydrolyzes its bound ATP, resulting in the formation of a stable complex. GrpE releases ADP from DnaK; ATP binding to DnaK triggers the release of the substrate protein, thus completing the reaction cycle. Several rounds of ATP-dependent interactions between DnaJ, DnaK and GrpE are required for fully efficient folding. Also involved, together with DnaK and GrpE, in the DNA replication of plasmids through activation of initiation proteins. In Burkholderia vietnamiensis (strain G4 / LMG 22486) (Burkholderia cepacia (strain R1808)), this protein is Chaperone protein DnaJ.